The chain runs to 251 residues: Malonyl-[acyl-carrier protein] O-methyltransferase (251 aa).

Belongs to the methyltransferase superfamily.

The enzyme catalyses malonyl-[ACP] + S-adenosyl-L-methionine = malonyl-[ACP] methyl ester + S-adenosyl-L-homocysteine. Its pathway is cofactor biosynthesis; biotin biosynthesis. Converts the free carboxyl group of a malonyl-thioester to its methyl ester by transfer of a methyl group from S-adenosyl-L-methionine (SAM). It allows to synthesize pimeloyl-ACP via the fatty acid synthetic pathway. This chain is Malonyl-[acyl-carrier protein] O-methyltransferase, found in Pseudescherichia vulneris (Escherichia vulneris).